Reading from the N-terminus, the 1117-residue chain is Lid2 complex component snt2 (1117 aa).

Positions 89 to 208 (ELIQPNDFVL…QNINKVFDVV (120 aa)) constitute a BAH domain. The Phorbol-ester/DAG-type zinc finger occupies 227-282 (NYDFIVTEYGKGRALLNEPSNCKVCKKWCAFDFSVQCADCKKYYHMDCVVPPLLKK). Residues 245-297 (PSNCKVCKKWCAFDFSVQCADCKKYYHMDCVVPPLLKKPPHGFGWTCATCSFA) form a PHD-type 1 zinc finger. Residues 361-380 (SSRNLHQQSRKSLDENKPNS) form a disordered region. The PHD-type 2 zinc-finger motif lies at 798–882 (KKCCALCGIV…SWACLSCRSN (85 aa)). Residues 890 to 925 (DNHCVLCLQSASHSLMKKTVEGNWVHLICASWTPDV) form a C2HC pre-PHD-type zinc finger. The PHD-type 3; degenerate zinc-finger motif lies at 948–1002 (KKCEVCGNSFGVCVSSPNSGLTSHVTCAEKANWYLGFEFVKQDQSPFSMLSNLKS).

In terms of assembly, component of the Lid2 complex composed of ash2, jmj3, lid2, sdc1 and snt2.

It is found in the nucleus. This is Lid2 complex component snt2 (snt2) from Schizosaccharomyces pombe (strain 972 / ATCC 24843) (Fission yeast).